The sequence spans 79 residues: Sulfur carrier protein TusA (79 aa).

The Cysteine persulfide intermediate role is filled by cysteine 16.

Belongs to the sulfur carrier protein TusA family.

It localises to the cytoplasm. Functionally, sulfur carrier protein which probably makes part of a sulfur-relay system. The protein is Sulfur carrier protein TusA of Pseudomonas paraeruginosa (strain DSM 24068 / PA7) (Pseudomonas aeruginosa (strain PA7)).